We begin with the raw amino-acid sequence, 592 residues long: Arginine--tRNA ligase (592 aa).

The short motif at Ala128–His138 is the 'HIGH' region element.

Belongs to the class-I aminoacyl-tRNA synthetase family. As to quaternary structure, monomer.

The protein localises to the cytoplasm. It catalyses the reaction tRNA(Arg) + L-arginine + ATP = L-arginyl-tRNA(Arg) + AMP + diphosphate. The chain is Arginine--tRNA ligase from Hydrogenovibrio crunogenus (strain DSM 25203 / XCL-2) (Thiomicrospira crunogena).